A 587-amino-acid chain; its full sequence is Putative adenylate cyclase 3 (587 aa).

A Guanylate cyclase domain is found at 12 to 127; it reads AILAADAVGY…DGVNVAARIE (116 aa). TPR repeat units follow at residues 343-376, 421-454, 455-488, 490-522, and 524-556; these read LLVRSRQAILQFNALSSMEARRMLHRVLEIDPGM, PQGHYTLALALSWMRRLDEAEHAAERAIELDPNS, ANAYTALGTIRDFQGRHEEALALYTRAHRLDPQF, LSLHFQGRALLNLGRFDEAEVAFKRRLLLAPRS, and MTRFYLACLYGRTGRHEEARGYWREVLGVNPSF.

The protein belongs to the adenylyl cyclase class-3 family.

It catalyses the reaction ATP = 3',5'-cyclic AMP + diphosphate. The protein is Putative adenylate cyclase 3 (cya3) of Rhizobium meliloti (strain 1021) (Ensifer meliloti).